The sequence spans 458 residues: UDP-N-acetylmuramoylalanine--D-glutamate ligase (458 aa).

Residue 124-130 (GSDGKTT) participates in ATP binding.

This sequence belongs to the MurCDEF family.

The protein localises to the cytoplasm. It catalyses the reaction UDP-N-acetyl-alpha-D-muramoyl-L-alanine + D-glutamate + ATP = UDP-N-acetyl-alpha-D-muramoyl-L-alanyl-D-glutamate + ADP + phosphate + H(+). Its pathway is cell wall biogenesis; peptidoglycan biosynthesis. Cell wall formation. Catalyzes the addition of glutamate to the nucleotide precursor UDP-N-acetylmuramoyl-L-alanine (UMA). The chain is UDP-N-acetylmuramoylalanine--D-glutamate ligase from Clostridium botulinum (strain 657 / Type Ba4).